The sequence spans 346 residues: UDP-3-O-acylglucosamine N-acyltransferase (346 aa).

The Proton acceptor role is filled by His253.

It belongs to the transferase hexapeptide repeat family. LpxD subfamily. Homotrimer.

It catalyses the reaction a UDP-3-O-[(3R)-3-hydroxyacyl]-alpha-D-glucosamine + a (3R)-hydroxyacyl-[ACP] = a UDP-2-N,3-O-bis[(3R)-3-hydroxyacyl]-alpha-D-glucosamine + holo-[ACP] + H(+). Its pathway is bacterial outer membrane biogenesis; LPS lipid A biosynthesis. Functionally, catalyzes the N-acylation of UDP-3-O-acylglucosamine using 3-hydroxyacyl-ACP as the acyl donor. Is involved in the biosynthesis of lipid A, a phosphorylated glycolipid that anchors the lipopolysaccharide to the outer membrane of the cell. The protein is UDP-3-O-acylglucosamine N-acyltransferase of Rickettsia conorii (strain ATCC VR-613 / Malish 7).